Reading from the N-terminus, the 189-residue chain is Large ribosomal subunit protein bL17 (189 aa).

Residues 136-189 are disordered; sequence KAAPAAEEEVVETEEAPAVEAEAAESEEAPAAEAEAAEAEAAETEEAPAAEDKK. Residues 141 to 189 are compositionally biased toward acidic residues; that stretch reads AEEEVVETEEAPAVEAEAAESEEAPAAEAEAAEAEAAETEEAPAAEDKK.

The protein belongs to the bacterial ribosomal protein bL17 family. Part of the 50S ribosomal subunit. Contacts protein L32.

The sequence is that of Large ribosomal subunit protein bL17 from Paenarthrobacter aurescens (strain TC1).